The following is a 439-amino-acid chain: Adenylosuccinate synthetase (439 aa).

Residues 12–18 (GDEGKGK) and 40–42 (GHT) each bind GTP. The Proton acceptor role is filled by Asp13. The Mg(2+) site is built by Asp13 and Gly40. Residues 13–16 (DEGK), 38–41 (NAGH), Thr137, Arg151, Gln232, Thr247, and Arg311 contribute to the IMP site. Catalysis depends on His41, which acts as the Proton donor. Residue 307–313 (ATTGRPR) participates in substrate binding. GTP-binding positions include Arg313, 339 to 341 (KLD), and 421 to 423 (SNG).

The protein belongs to the adenylosuccinate synthetase family. Homodimer. Mg(2+) is required as a cofactor.

It localises to the cytoplasm. The enzyme catalyses IMP + L-aspartate + GTP = N(6)-(1,2-dicarboxyethyl)-AMP + GDP + phosphate + 2 H(+). The protein operates within purine metabolism; AMP biosynthesis via de novo pathway; AMP from IMP: step 1/2. Its function is as follows. Plays an important role in the de novo pathway of purine nucleotide biosynthesis. Catalyzes the first committed step in the biosynthesis of AMP from IMP. This chain is Adenylosuccinate synthetase, found in Salinibacter ruber (strain DSM 13855 / M31).